Here is a 260-residue protein sequence, read N- to C-terminus: Membrane protein insertase YidC 1 (260 aa).

The signal sequence occupies residues 1–22 (MLKSYRAVLVSLSLLLVFVLSG). Cys23 carries N-palmitoyl cysteine lipidation. A lipid anchor (S-diacylglycerol cysteine) is attached at Cys23. 5 helical membrane passes run 29–49 (IDAH…SFMI), 52–72 (VAHH…TLVI), 133–153 (LAGC…YYAI), 164–184 (FLWV…IAAL), and 213–233 (MPAM…LYWI).

The protein belongs to the OXA1/ALB3/YidC family. Type 2 subfamily.

The protein localises to the cell membrane. Functionally, required for the insertion and/or proper folding and/or complex formation of integral membrane proteins into the membrane. Involved in integration of membrane proteins that insert both dependently and independently of the Sec translocase complex, as well as at least some lipoproteins. The chain is Membrane protein insertase YidC 1 from Bacillus anthracis.